Consider the following 297-residue polypeptide: GTPase Era (297 aa).

An Era-type G domain is found at 7 to 174 (RSGFVSIVGR…VQLVHGLLPE (168 aa)). Residues 15–22 (GRPNVGKS) are G1. 15–22 (GRPNVGKS) contributes to the GTP binding site. Positions 41–45 (QTTRN) are G2. The tract at residues 62–65 (DTPG) is G3. Residues 62–66 (DTPGI) and 124–127 (NKID) contribute to the GTP site. The interval 124-127 (NKID) is G4. The tract at residues 153-155 (VSA) is G5. Residues 205–282 (THDEVPYSTA…FLELFVRVSG (78 aa)) form the KH type-2 domain.

This sequence belongs to the TRAFAC class TrmE-Era-EngA-EngB-Septin-like GTPase superfamily. Era GTPase family. In terms of assembly, monomer.

Its subcellular location is the cytoplasm. It localises to the cell inner membrane. In terms of biological role, an essential GTPase that binds both GDP and GTP, with rapid nucleotide exchange. Plays a role in 16S rRNA processing and 30S ribosomal subunit biogenesis and possibly also in cell cycle regulation and energy metabolism. The protein is GTPase Era of Geobacter sp. (strain M21).